We begin with the raw amino-acid sequence, 293 residues long: Methylsterol monooxygenase 1 (293 aa).

The next 2 helical transmembrane spans lie at 55-75 and 100-120; these read LIVHEAIYFLFSLPGFLFQFI and KILFNHFFIQLPLICGTYYFT. Residues 144–274 enclose the Fatty acid hydroxylase domain; sequence GCAVIEDTWH…FTWWDKLFGT (131 aa). Residues 157–161 carry the Histidine box-1 motif; sequence HRLLH. The Histidine box-2 motif lies at 170 to 174; that stretch reads HKVHH. The helical transmembrane segment at 199–219 threads the bilayer; it reads FFIGIVLLCDHVILLWAWVTI. The Histidine box-3 motif lies at 249–255; the sequence is HHDFHHM.

It belongs to the sterol desaturase family. The cofactor is Fe cation. Post-translationally, ubiquitinated by MARCHF6, leading to proteasomal degradation.

The protein localises to the endoplasmic reticulum membrane. It carries out the reaction 4,4-dimethyl-5alpha-cholest-7-en-3beta-ol + 6 Fe(II)-[cytochrome b5] + 3 O2 + 5 H(+) = 4alpha-carboxy-4beta-methyl-5alpha-cholest-7-ene-3beta-ol + 6 Fe(III)-[cytochrome b5] + 4 H2O. The enzyme catalyses 4,4-dimethyl-5alpha-cholesta-8,24-dien-3beta-ol + 6 Fe(II)-[cytochrome b5] + 3 O2 + 5 H(+) = 4beta-methylzymosterol-4alpha-carboxylate + 6 Fe(III)-[cytochrome b5] + 4 H2O. The catalysed reaction is 4alpha-methylzymosterol + 6 Fe(II)-[cytochrome b5] + 3 O2 + 5 H(+) = 4alpha-carboxyzymosterol + 6 Fe(III)-[cytochrome b5] + 4 H2O. It catalyses the reaction 4alpha-methyl-5alpha-cholest-7-en-3beta-ol + 6 Fe(II)-[cytochrome b5] + 3 O2 + 5 H(+) = 4alpha-carboxy-5alpha-cholest-7-en-3beta-ol + 6 Fe(III)-[cytochrome b5] + 4 H2O. It carries out the reaction 4,4-dimethyl-5alpha-cholest-8-en-3beta-ol + 6 Fe(II)-[cytochrome b5] + 3 O2 + 5 H(+) = 4alpha-carboxy-4beta-methyl-5alpha-cholest-8-en-3beta-ol + 6 Fe(III)-[cytochrome b5] + 4 H2O. The enzyme catalyses 4alpha-methyl-5alpha-cholest-8-en-3beta-ol + 6 Fe(II)-[cytochrome b5] + 3 O2 + 5 H(+) = 4alpha-carboxy-5alpha-cholest-8-ene-3beta-ol + 6 Fe(III)-[cytochrome b5] + 4 H2O. Its pathway is steroid biosynthesis; zymosterol biosynthesis; zymosterol from lanosterol: step 3/6. The protein operates within steroid biosynthesis; cholesterol biosynthesis. Functionally, catalyzes the three-step monooxygenation required for the demethylation of 4,4-dimethyl and 4alpha-methylsterols, which can be subsequently metabolized to cholesterol. In Mus musculus (Mouse), this protein is Methylsterol monooxygenase 1 (Msmo1).